The following is a 351-amino-acid chain: DNA polymerase IV (351 aa).

Residues 4-185 (IIHVDMDCFF…LPLAKIPGVG (182 aa)) form the UmuC domain. Mg(2+) contacts are provided by D8 and D103. E104 is an active-site residue.

Belongs to the DNA polymerase type-Y family. As to quaternary structure, monomer. It depends on Mg(2+) as a cofactor.

It is found in the cytoplasm. The catalysed reaction is DNA(n) + a 2'-deoxyribonucleoside 5'-triphosphate = DNA(n+1) + diphosphate. In terms of biological role, poorly processive, error-prone DNA polymerase involved in untargeted mutagenesis. Copies undamaged DNA at stalled replication forks, which arise in vivo from mismatched or misaligned primer ends. These misaligned primers can be extended by PolIV. Exhibits no 3'-5' exonuclease (proofreading) activity. May be involved in translesional synthesis, in conjunction with the beta clamp from PolIII. The protein is DNA polymerase IV of Escherichia coli O9:H4 (strain HS).